We begin with the raw amino-acid sequence, 313 residues long: tRNA dimethylallyltransferase (313 aa).

17–24 (GPTASGKT) provides a ligand contact to ATP. 19–24 (TASGKT) lines the substrate pocket. Interaction with substrate tRNA stretches follow at residues 42–45 (DSAL), 166–170 (QRLSR), 247–252 (RCVGYR), and 280–287 (KRQITWLR).

Belongs to the IPP transferase family. Monomer. Mg(2+) is required as a cofactor.

The catalysed reaction is adenosine(37) in tRNA + dimethylallyl diphosphate = N(6)-dimethylallyladenosine(37) in tRNA + diphosphate. Functionally, catalyzes the transfer of a dimethylallyl group onto the adenine at position 37 in tRNAs that read codons beginning with uridine, leading to the formation of N6-(dimethylallyl)adenosine (i(6)A). The protein is tRNA dimethylallyltransferase of Proteus mirabilis (strain HI4320).